The chain runs to 454 residues: Type II methyltransferase M.MvaI (454 aa).

Belongs to the N(4)/N(6)-methyltransferase family. N(4) subfamily.

The enzyme catalyses a 2'-deoxycytidine in DNA + S-adenosyl-L-methionine = an N(4)-methyl-2'-deoxycytidine in DNA + S-adenosyl-L-homocysteine + H(+). An alpha subtype methylase, recognizes the double-stranded sequence 5'-CCWGG-3', methylatES C-2 on both strands, and protects the DNA from cleavage by the MvaI endonuclease. This chain is Type II methyltransferase M.MvaI, found in Kocuria varians (Micrococcus varians).